Consider the following 523-residue polypeptide: Ribonuclease Y (523 aa).

A helical transmembrane segment spans residues Thr28–Ile48. A KH domain is found at Thr227–Val312. The 94-residue stretch at Val353–Ala446 folds into the HD domain.

The protein belongs to the RNase Y family.

Its subcellular location is the cell membrane. Its function is as follows. Endoribonuclease that initiates mRNA decay. This Clostridium tetani (strain Massachusetts / E88) protein is Ribonuclease Y.